The following is a 244-amino-acid chain: UPF0280 protein Msp_1322 (244 aa).

It belongs to the UPF0280 family.

The chain is UPF0280 protein Msp_1322 from Methanosphaera stadtmanae (strain ATCC 43021 / DSM 3091 / JCM 11832 / MCB-3).